The chain runs to 542 residues: MDLDAITKHSASHAKPDGLILQYGTAGFRTKADRLDHVMFRMGLLAVLRSKQTKSTIGVMVTASHNPEDDNGVKLVDPLGEMLAPSWEEHATHLANAEEQDLARALVAISEEAAVNLHQDAFVVIGRDTRPSSEKLSESVIDGVTVLGGQFHDYGLLTTPQLHYMVCCRNTGGQYGEATIDGYYHKLSTAFVELSKQASCSGDDHRTLKVDCANGIGALKLKEMKHYLPQGLSVQLFNDGTKGKLNHFCGADFVKSHQKPPEGIEMKANERCCSFDGDADRIIYYYCDVDGHFHLIDGDKIATLISSFLKELLLEIGESLTVGVVQTAYANGSSTRYLEEVMKVPVYCTKTGVKHLHHKAQEFDLGVYFEANGHGTVLFSKAAEAKIRQLAKELEDKKGKAAKMLENVIDLFNQATGDAISDMLVIEAILALKGLTIQQWDALYTDLPNRQLKVKVADRQVISTTDAERQVVKPPGLQEAINDLVKKYKLSRAFVRPSGTEDVVRVYAEADSQENADSLAYEVSLAVFQQAGGVGERPQPGF.

The residue at position 1 (methionine 1) is an N-acetylmethionine. Phosphothreonine is present on threonine 62. The active-site Phosphoserine intermediate is the serine 64. Residues serine 64, aspartate 276, aspartate 278, and aspartate 280 each contribute to the Mg(2+) site. Position 64 is a phosphoserine (serine 64). Substrate-binding positions include 370–372 (EAN), 496–500 (RPSGT), and arginine 505.

Belongs to the phosphohexose mutase family. The cofactor is Mg(2+).

The catalysed reaction is N-acetyl-alpha-D-glucosamine 1-phosphate = N-acetyl-D-glucosamine 6-phosphate. The protein operates within nucleotide-sugar biosynthesis; UDP-N-acetyl-alpha-D-glucosamine biosynthesis; N-acetyl-alpha-D-glucosamine 1-phosphate from alpha-D-glucosamine 6-phosphate (route I): step 2/2. Its activity is regulated as follows. Inhibited by Mn(2+), Cd(2+), Zn(2+), Cu(2+) and Be(2+). In terms of biological role, catalyzes the conversion of GlcNAc-6-P into GlcNAc-1-P during the synthesis of uridine diphosphate/UDP-GlcNAc, a sugar nucleotide critical to multiple glycosylation pathways including protein N- and O-glycosylation. This Sus scrofa (Pig) protein is Phosphoacetylglucosamine mutase.